Reading from the N-terminus, the 940-residue chain is Serine/threonine-protein phosphatase 1 regulatory subunit 10 (940 aa).

An interaction with TOX4 region spans residues 1 to 348 (MGSGPIDPKE…EPAPPSEAME (348 aa)). The TFIIS N-terminal domain occupies 73–147 (KLLNNWLTYS…SDWMAVIRSQ (75 aa)). Disordered stretches follow at residues 147–210 (QSST…KFRS), 248–270 (NVAA…NTTP), 304–400 (KIKK…KSVT), and 534–557 (VETL…LPPV). Basic and acidic residues-rich tracts occupy residues 153–166 (AEKD…EGKS) and 174–196 (PLTE…EKPK). A Glycyl lysine isopeptide (Lys-Gly) (interchain with G-Cter in SUMO2) cross-link involves residue K179. The residue at position 256 (T256) is a Phosphothreonine. Residue K262 forms a Glycyl lysine isopeptide (Lys-Gly) (interchain with G-Cter in SUMO2) linkage. Position 313 is a phosphoserine (S313). The segment covering 325–336 (KTSTEPSTAKPS) has biased composition (low complexity). Residues 357–433 (PPVEVPELMD…NKIKDFGEAA (77 aa)) form a necessary for interaction with PPP1CA region. S382 carries the phosphoserine modification. Positions 393-408 (GRKRKSVTWPEEGKLR) are necessary for interaction with PPP1CC. The short motif at 394–423 (RKRKSVTWPEEGKLREYFYFELDETERVNV) is the PP1-binding motif element. S398 carries the post-translational modification Phosphoserine; by PKA. The tract at residues 418–619 (TERVNVNKIK…IKQMLVPHGL (202 aa)) is interaction with WDR82. The span at 540–551 (GGSGGSPDGAGG) shows a compositional bias: gly residues. A phosphoserine mark is found at S545 and S591. Residues 617 to 905 (HGLLGPGPIA…HDGGHSHGGD (289 aa)) are disordered. A compositionally biased stretch (pro residues) spans 644–655 (PPGPGGPMPGPH). R665 carries the post-translational modification Omega-N-methylarginine. Residues 676 to 690 (GDPFWDGPGDPMRGG) show a composition bias toward low complexity. Omega-N-methylarginine occurs at positions 693 and 738. 2 stretches are compositionally biased toward gly residues: residues 725–763 (ARGG…GMGN) and 789–844 (GSMG…GSGG). Composition is skewed to basic and acidic residues over residues 861-886 (PHDV…HDGP) and 894-903 (RGHDGGHSHG). The C3H1-type zinc-finger motif lies at 906 to 934 (MSNRPVCRHFMMKGNCRYENNCAFYHPGV).

In terms of assembly, component of the PNUTS-PP1 complex (also named PTW/PP1 complex), composed of PPP1R10/PNUTS, TOX4, WDR82, and PPP1CA (or PPP1CB or PPP1CC). Phosphorylated on Ser-398 by PKA within the region necessary for interaction with PPP1CA.

The protein localises to the nucleus. It localises to the chromosome. In terms of biological role, substrate-recognition component of the PNUTS-PP1 protein phosphatase complex, a protein phosphatase 1 (PP1) complex that promotes RNA polymerase II transcription pause-release, allowing transcription elongation. Promoter-proximal pausing by RNA polymerase II is a transcription halt following transcription initiation but prior to elongation, which acts as a checkpoint to control that transcripts are favorably configured for transcriptional elongation. The PNUTS-PP1 complex mediates the release of RNA polymerase II from promoter-proximal region of genes by catalyzing dephosphorylation of proteins involved in transcription, such as AFF4, CDK9, MEPCE, INTS12, NCBP1, POLR2M/GDOWN1 and SUPT6H. The PNUTS-PP1 complex also regulates RNA polymerase II transcription termination by mediating dephosphorylation of SUPT5H in termination zones downstream of poly(A) sites, thereby promoting deceleration of RNA polymerase II transcription. PNUTS-PP1 complex is also involved in the response to replication stress by mediating dephosphorylation of POLR2A at 'Ser-5' of the CTD, promoting RNA polymerase II degradation. The PNUTS-PP1 complex also plays a role in the control of chromatin structure and cell cycle progression during the transition from mitosis into interphase. PNUTS-PP1 complex mediates dephosphorylation of MYC, promoting MYC stability by preventing MYC ubiquitination by the SCF(FBXW7) complex. In addition to acts as a substrate-recognition component, PPP1R10/PNUTS also acts as a nuclear targeting subunit for the PNUTS-PP1 complex. In some context, PPP1R10/PNUTS also acts as an inhibitor of protein phosphatase 1 (PP1) activity by preventing access to substrates, such as RB. The chain is Serine/threonine-protein phosphatase 1 regulatory subunit 10 (PPP1R10) from Pan troglodytes (Chimpanzee).